We begin with the raw amino-acid sequence, 194 residues long: Fimbrial protein 987P (194 aa).

The N-terminal stretch at 1 to 23 is a signal peptide; that stretch reads MRMKKSALTLAVLSSLFSGYSLA. Cys-46 and Cys-85 are joined by a disulfide.

The protein belongs to the fimbrial protein family.

The protein resides in the fimbrium. This chain is Fimbrial protein 987P (fasA), found in Escherichia coli.